We begin with the raw amino-acid sequence, 426 residues long: Enolase (426 aa).

Q163 is a (2R)-2-phosphoglycerate binding site. E205 functions as the Proton donor in the catalytic mechanism. Mg(2+) is bound by residues D242, E283, and D310. Positions 335, 364, 365, and 386 each coordinate (2R)-2-phosphoglycerate. K335 serves as the catalytic Proton acceptor.

Belongs to the enolase family. Requires Mg(2+) as cofactor.

It localises to the cytoplasm. Its subcellular location is the secreted. The protein resides in the cell surface. The enzyme catalyses (2R)-2-phosphoglycerate = phosphoenolpyruvate + H2O. The protein operates within carbohydrate degradation; glycolysis; pyruvate from D-glyceraldehyde 3-phosphate: step 4/5. Catalyzes the reversible conversion of 2-phosphoglycerate (2-PG) into phosphoenolpyruvate (PEP). It is essential for the degradation of carbohydrates via glycolysis. In Paenarthrobacter aurescens (strain TC1), this protein is Enolase.